Reading from the N-terminus, the 375-residue chain is Nucleolysin TIAR (375 aa).

RRM domains are found at residues 9-85 (RTLY…WATT) and 97-175 (FHVF…WATR). Lys122 carries the N6-acetyllysine modification. At Ser201 the chain carries Phosphoserine. The 73-residue stretch at 205–277 (CTVYCGGIAS…HVVKCYWGKE (73 aa)) folds into the RRM 3 domain. The tract at residues 345-375 (FGAQPPQGQAPPPVIPPPNQAGYGMASYQTQ) is disordered. The segment covering 352–363 (GQAPPPVIPPPN) has biased composition (pro residues).

Interacts with FASTK. Post-translationally, phosphorylated by MAPK14 following DNA damage, releasing TIAR from GADD45A mRNA. As to expression, expressed in brain, heart, kidney, lung and skeletal muscle.

It is found in the nucleus. It localises to the cytoplasm. Its subcellular location is the cytolytic granule. The protein resides in the stress granule. In terms of biological role, RNA-binding protein involved in alternative pre-RNA splicing and in cytoplasmic stress granules formation. Shows a preference for uridine-rich RNAs. Activates splicing of alternative exons with weak 5' splice sites followed by a U-rich stretch on its own pre-mRNA and on TIA1 mRNA. Promotes the inclusion of TIA1 exon 5 to give rise to the long isoform (isoform a) of TIA1. Acts downstream of the stress-induced phosphorylation of EIF2S1/EIF2A to promote the recruitment of untranslated mRNAs to cytoplasmic stress granules (SG). Possesses nucleolytic activity against cytotoxic lymphocyte target cells. May be involved in apoptosis. In Homo sapiens (Human), this protein is Nucleolysin TIAR (TIAL1).